The sequence spans 513 residues: Probable cytosol aminopeptidase (513 aa).

Lys-277 and Asp-282 together coordinate Mn(2+). Lys-289 is a catalytic residue. Positions 300, 359, and 361 each coordinate Mn(2+). Arg-363 is a catalytic residue.

The protein belongs to the peptidase M17 family. The cofactor is Mn(2+).

The protein resides in the cytoplasm. The enzyme catalyses Release of an N-terminal amino acid, Xaa-|-Yaa-, in which Xaa is preferably Leu, but may be other amino acids including Pro although not Arg or Lys, and Yaa may be Pro. Amino acid amides and methyl esters are also readily hydrolyzed, but rates on arylamides are exceedingly low.. It carries out the reaction Release of an N-terminal amino acid, preferentially leucine, but not glutamic or aspartic acids.. Presumably involved in the processing and regular turnover of intracellular proteins. Catalyzes the removal of unsubstituted N-terminal amino acids from various peptides. The sequence is that of Probable cytosol aminopeptidase from Mycobacterium sp. (strain KMS).